The following is a 610-amino-acid chain: UvrABC system protein C (610 aa).

Residues Asn-16–Val-94 enclose the GIY-YIG domain. Positions Asn-204–Val-239 constitute a UVR domain.

It belongs to the UvrC family. In terms of assembly, interacts with UvrB in an incision complex.

It localises to the cytoplasm. Its function is as follows. The UvrABC repair system catalyzes the recognition and processing of DNA lesions. UvrC both incises the 5' and 3' sides of the lesion. The N-terminal half is responsible for the 3' incision and the C-terminal half is responsible for the 5' incision. The polypeptide is UvrABC system protein C (Vibrio cholerae serotype O1 (strain ATCC 39315 / El Tor Inaba N16961)).